We begin with the raw amino-acid sequence, 446 residues long: Tubulin beta chain (446 aa).

8 residues coordinate GTP: Q11, E69, S138, G142, T143, G144, N204, and N226. E69 is a Mg(2+) binding site. The interval 426-446 (QDATAEEEGEYVEDEDEMDGM) is disordered. Residues 429–446 (TAEEEGEYVEDEDEMDGM) show a composition bias toward acidic residues.

The protein belongs to the tubulin family. Dimer of alpha and beta chains. A typical microtubule is a hollow water-filled tube with an outer diameter of 25 nm and an inner diameter of 15 nM. Alpha-beta heterodimers associate head-to-tail to form protofilaments running lengthwise along the microtubule wall with the beta-tubulin subunit facing the microtubule plus end conferring a structural polarity. Microtubules usually have 13 protofilaments but different protofilament numbers can be found in some organisms and specialized cells. Requires Mg(2+) as cofactor.

It localises to the cytoplasm. The protein resides in the cytoskeleton. Tubulin is the major constituent of microtubules, a cylinder consisting of laterally associated linear protofilaments composed of alpha- and beta-tubulin heterodimers. Microtubules grow by the addition of GTP-tubulin dimers to the microtubule end, where a stabilizing cap forms. Below the cap, tubulin dimers are in GDP-bound state, owing to GTPase activity of alpha-tubulin. The sequence is that of Tubulin beta chain from Euplotes crassus.